A 260-amino-acid chain; its full sequence is Membrane protein insertase YidC 1 (260 aa).

Residues 1–22 (MLKSYRAVLVSLSLLFVFVLSG) form the signal peptide. The N-palmitoyl cysteine moiety is linked to residue Cys23. Cys23 is lipidated: S-diacylglycerol cysteine. The next 5 helical transmembrane spans lie at 29-49 (IDAHSTGIWDHYFVYPISFMI), 52-72 (VAHHIPGASFGIAIIIMTLVI), 133-153 (LAGCWPLLIQMPIFSALYYAI), 164-184 (FLWVNLGHADPYHILPIIAAL), and 213-233 (MPAMILFMGFAAPSGLVLYWI).

This sequence belongs to the OXA1/ALB3/YidC family. Type 2 subfamily.

The protein localises to the cell membrane. In terms of biological role, required for the insertion and/or proper folding and/or complex formation of integral membrane proteins into the membrane. Involved in integration of membrane proteins that insert both dependently and independently of the Sec translocase complex, as well as at least some lipoproteins. In Bacillus cereus (strain ATCC 14579 / DSM 31 / CCUG 7414 / JCM 2152 / NBRC 15305 / NCIMB 9373 / NCTC 2599 / NRRL B-3711), this protein is Membrane protein insertase YidC 1.